A 29-amino-acid chain; its full sequence is Cytochrome b6-f complex subunit 8 (29 aa).

A helical transmembrane segment spans residues 3–23 (IVNIAWAALMVVSTFSLTLVV).

The protein belongs to the PetN family. In terms of assembly, the 4 large subunits of the cytochrome b6-f complex are cytochrome b6, subunit IV (17 kDa polypeptide, PetD), cytochrome f and the Rieske protein, while the 4 small subunits are PetG, PetL, PetM and PetN. The complex functions as a dimer.

It localises to the plastid. Its subcellular location is the chloroplast thylakoid membrane. In terms of biological role, component of the cytochrome b6-f complex, which mediates electron transfer between photosystem II (PSII) and photosystem I (PSI), cyclic electron flow around PSI, and state transitions. This chain is Cytochrome b6-f complex subunit 8, found in Huperzia lucidula (Shining clubmoss).